We begin with the raw amino-acid sequence, 1563 residues long: Rab-3-interacting molecule unc-10 (1563 aa).

In terms of domain architecture, RabBD spans 7-133 (MPDLSHLSAE…AKTGKWFQPE (127 aa)). A compositionally biased stretch (basic and acidic residues) spans 25-35 (FKRQKDEEAKE). The interval 25 to 50 (FKRQKDEEAKETQISQKASEELSELD) is disordered. The segment at 66-121 (TQDDAICQICQKTKFADGIGHKCFYCQLRSCARCGGRAQSKNKAIWACSLCQKRQQ) adopts an FYVE-type zinc-finger fold. Positions 72, 75, 88, 91, 96, 99, 113, and 116 each coordinate Zn(2+). Disordered stretches follow at residues 128–466 (KWFQ…DHLN) and 582–605 (GGLD…RNDH). Residues 172 to 182 (NTPNYQNNQQP) show a composition bias toward polar residues. Low complexity-rich tracts occupy residues 190 to 284 (NHNQ…RNQT) and 300 to 316 (QTPQ…VGAA). The span at 326 to 345 (QEQHHQQMNEQRTDNNRMRE) shows a compositional bias: basic and acidic residues. Composition is skewed to polar residues over residues 356–367 (RQPSLEQTTPMN) and 379–389 (QRPTFYTGNSE). Residues 395-415 (FDGQMQQGSQQNNQNQNQNNR) are compositionally biased toward low complexity. The 91-residue stretch at 643–733 (HMILHRTENS…DTSVELIVSR (91 aa)) folds into the PDZ domain. Residues 840–962 (IFGRIEVSFV…PLDGEHSLMC (123 aa)) form the C2 1 domain. Disordered regions lie at residues 1054 to 1163 (ENDI…YLGD), 1177 to 1311 (GQMT…GGSA), and 1346 to 1373 (VGIP…KEST). The span at 1086–1097 (WTQNHQRQSGYT) shows a compositional bias: polar residues. A compositionally biased stretch (basic residues) spans 1112-1121 (YNRRQQRRPR). Basic and acidic residues predominate over residues 1129-1154 (MEREDMYDPTRKHRDDNEYSMRESVR). A compositionally biased stretch (low complexity) spans 1181–1230 (PKQHNQQHQPHPLSQAHQQQQTAGVQPQHHQGFQQQQHPQQPNQQMQQMQ). Over residues 1242 to 1255 (GSETLSVHSTNSMP) the composition is skewed to polar residues. Positions 1256–1277 (TTMTTVNRRNMNANNTSNDNTS) are enriched in low complexity. The span at 1278–1288 (FAETPTANTNR) shows a compositional bias: polar residues. The segment covering 1297-1311 (NSLASSSSVAGGGSA) has biased composition (low complexity). One can recognise a C2 2 domain in the interval 1417–1536 (VLGEIQIALM…LGSQPLIGWY (120 aa)).

As to expression, restricted to discrete puncta in synapse-rich regions of the nervous system including the nerve ring, the ventral nerve cord and the dorsal nerve cord. Localized expression was found in the head.

The protein resides in the synapse. Regulates the efficiency of a post-docking step of the release pathway. Acts after vesicle docking likely via regulating priming. May regulate the conformational changes in syntaxin. Binding of vesicles via rab-3[GTP] to Rim may signal the presence of a docked synaptic vesicle. Rim may then signal to unc-13 to change the conformation of syntaxin from the closed to the open state. Syntaxin could then engage synaptobrevin on the docked vesicle to form SNARE complexes and to prime the vesicle for release. Not required for the development or the structural organization of synapses. May play a role in regulating entry into the dauer state. This Caenorhabditis elegans protein is Rab-3-interacting molecule unc-10.